Reading from the N-terminus, the 355-residue chain is Beta-porphyranase C (355 aa).

The first 18 residues, 1–18 (MIKTLKRIPLVFLIAIMA), serve as a signal peptide directing secretion. Cys-19 carries N-palmitoyl cysteine lipidation. Residue Cys-19 is the site of S-diacylglycerol cysteine attachment. A disordered region spans residues 22 to 72 (SGDNGKDKVEEQEQAQEQGEKKGQGEERDKEDGIDGLQPTFLADQDPKPDD). Basic and acidic residues predominate over residues 39–54 (QGEKKGQGEERDKEDG). Positions 71 to 355 (DDKKWIKVEG…WVRVWQLEDL (285 aa)) constitute a GH16 domain. The substrate site is built by Trp-110, Glu-208, and Glu-213. The active-site Nucleophile is the Glu-208. Glu-213 functions as the Proton donor in the catalytic mechanism.

It belongs to the glycosyl hydrolase 16 family.

The protein resides in the cell outer membrane. It catalyses the reaction Hydrolysis of beta-D-galactopyranose-(1-&gt;4)-alpha-L-galactopyranose-6-sulfate linkages in porphyran.. Its function is as follows. Cleaves the sulfated polysaccharide porphyran at the (1-&gt;4) linkages between beta-D-galactopyranose and alpha-L-galactopyranose-6-sulfate, forming mostly the disaccharide alpha-L-galactopyranose-6-sulfate-(1-&gt;3)-beta-D-galactose. This Zobellia galactanivorans (strain DSM 12802 / CCUG 47099 / CIP 106680 / NCIMB 13871 / Dsij) protein is Beta-porphyranase C (porC).